The primary structure comprises 151 residues: Transcriptional regulator MraZ (151 aa).

SpoVT-AbrB domains follow at residues 5–52 (ANAI…PLDE) and 81–124 (AVDL…DEDA).

The protein belongs to the MraZ family. In terms of assembly, forms oligomers.

It localises to the cytoplasm. Its subcellular location is the nucleoid. The sequence is that of Transcriptional regulator MraZ from Pseudomonas fluorescens (strain SBW25).